The following is a 247-amino-acid chain: Carboxy-S-adenosyl-L-methionine synthase (247 aa).

S-adenosyl-L-methionine-binding positions include tyrosine 39, 64-66, 89-90, 117-118, asparagine 132, and arginine 199; these read GCS, DN, and DI.

The protein belongs to the class I-like SAM-binding methyltransferase superfamily. Cx-SAM synthase family. Homodimer.

The enzyme catalyses prephenate + S-adenosyl-L-methionine = carboxy-S-adenosyl-L-methionine + 3-phenylpyruvate + H2O. Its function is as follows. Catalyzes the conversion of S-adenosyl-L-methionine (SAM) to carboxy-S-adenosyl-L-methionine (Cx-SAM). In Escherichia coli O139:H28 (strain E24377A / ETEC), this protein is Carboxy-S-adenosyl-L-methionine synthase.